The chain runs to 201 residues: 3-isopropylmalate dehydratase small subunit (201 aa).

It belongs to the LeuD family. LeuD type 1 subfamily. Heterodimer of LeuC and LeuD.

It catalyses the reaction (2R,3S)-3-isopropylmalate = (2S)-2-isopropylmalate. It functions in the pathway amino-acid biosynthesis; L-leucine biosynthesis; L-leucine from 3-methyl-2-oxobutanoate: step 2/4. Its function is as follows. Catalyzes the isomerization between 2-isopropylmalate and 3-isopropylmalate, via the formation of 2-isopropylmaleate. This is 3-isopropylmalate dehydratase small subunit from Cytophaga hutchinsonii (strain ATCC 33406 / DSM 1761 / CIP 103989 / NBRC 15051 / NCIMB 9469 / D465).